Reading from the N-terminus, the 363-residue chain is Isopentenyl-diphosphate delta-isomerase (363 aa).

A substrate-binding site is contributed by 6-7 (RK). FMN-binding positions include 64-66 (AMT), Ser-94, and Asn-123. Gln-153 contributes to the substrate binding site. Residue Glu-154 coordinates Mg(2+). FMN contacts are provided by residues Lys-185, Ser-210, Thr-215, 259 to 261 (GVR), and 280 to 281 (SA).

Belongs to the IPP isomerase type 2 family. Homooctamer. Dimer of tetramers. It depends on Mg(2+) as a cofactor. FMN is required as a cofactor. NADPH serves as cofactor.

It localises to the cytoplasm. The catalysed reaction is isopentenyl diphosphate = dimethylallyl diphosphate. Involved in the biosynthesis of isoprenoids. Catalyzes the 1,3-allylic rearrangement of the homoallylic substrate isopentenyl (IPP) to its allylic isomer, dimethylallyl diphosphate (DMAPP). The polypeptide is Isopentenyl-diphosphate delta-isomerase (Streptomyces sp. (strain CL190)).